The sequence spans 206 residues: Protein SUE1, mitochondrial (206 aa).

The N-terminal 24 residues, 1-24 (MILLKRTKIRGVSVSFVSLQRRTH), are a transit peptide targeting the mitochondrion.

The protein localises to the mitochondrion envelope. In terms of biological role, required for degradation of unstable forms of cytochrome c. The chain is Protein SUE1, mitochondrial from Saccharomyces cerevisiae (strain ATCC 204508 / S288c) (Baker's yeast).